A 257-amino-acid chain; its full sequence is UPF0246 protein LPC_0782 (257 aa).

The protein belongs to the UPF0246 family.

The chain is UPF0246 protein LPC_0782 from Legionella pneumophila (strain Corby).